A 109-amino-acid chain; its full sequence is FK506-binding protein (109 aa).

The PPIase FKBP-type domain maps to 20–108; sequence GKEITVHYTG…IFEVELLKVY (89 aa).

It belongs to the FKBP-type PPIase family.

It catalyses the reaction [protein]-peptidylproline (omega=180) = [protein]-peptidylproline (omega=0). Its activity is regulated as follows. Inhibited by FK506. Functionally, PPIases accelerate the folding of proteins. The sequence is that of FK506-binding protein (fbp) from Neisseria meningitidis serogroup A / serotype 4A (strain DSM 15465 / Z2491).